The sequence spans 1352 residues: Astrotactin-2 (1352 aa).

The tract at residues 1–31 is disordered; sequence MAAAGARRSPGRGLGLRGRPRLGFHPGPPPP. A signal peptide spans 1–51; it reads MAAAGARRSPGRGLGLRGRPRLGFHPGPPPPPPPPLLLLFLLLLPPPPLLA. Over 52-218 the chain is Lumenal; it reads GATAAAASRE…IVEEQMHILH (167 aa). N-linked (GlcNAc...) asparagine glycosylation is present at asparagine 180. Residues 219–239 form a helical membrane-spanning segment; sequence ISVMGGLIALLLLLLVFTVAL. The Cytoplasmic portion of the chain corresponds to 240-447; that stretch reads YAQRRWQKRR…KGLLKSPVNK (208 aa). Disordered regions lie at residues 308-327 and 375-421; these read EEEE…DEFG and TPVE…ADDE. The span at 383-392 shows a compositional bias: polar residues; it reads QPASRSSTSA. Residues 448–468 traverse the membrane as a helical segment; sequence TALTLIAVSSCILAMVCGNQM. The Lumenal segment spans residues 469 to 1352; that stretch reads SCPLTVKVTL…RNTYGETKGR (884 aa). 3 consecutive EGF-like domains span residues 523 to 563, 664 to 708, and 712 to 764; these read VRDL…HLCV, PVRD…SGCY, and KGID…KSCL. Intrachain disulfides connect cysteine 527-cysteine 539, cysteine 535-cysteine 546, cysteine 548-cysteine 562, cysteine 668-cysteine 681, cysteine 675-cysteine 692, cysteine 694-cysteine 707, cysteine 716-cysteine 728, cysteine 724-cysteine 748, and cysteine 750-cysteine 763. Asparagine 796 carries N-linked (GlcNAc...) asparagine glycosylation. Disulfide bonds link cysteine 838/cysteine 1000, cysteine 929/cysteine 990, and cysteine 996/cysteine 1003. Residue asparagine 1033 is glycosylated (N-linked (GlcNAc...) asparagine). Intrachain disulfides connect cysteine 1049/cysteine 1060, cysteine 1062/cysteine 1075, cysteine 1149/cysteine 1171, cysteine 1203/cysteine 1290, and cysteine 1311/cysteine 1334. The Fibronectin type-III domain maps to 1079 to 1201; that stretch reads PQPVLRLSPT…SELSTVTLRT (123 aa).

The protein belongs to the astrotactin family. In terms of assembly, interacts with ASTN1; the interaction is not calcium-dependent. In terms of tissue distribution, detected in cerebellum granule neurons; not detected in astroglia (at protein level). Detected primarily in cerebellum, and at lower levels in brain cortex, olfactory bulb, hindbrain and hippocampus dentate gyrus. Between 6 and 10 days after birth, when granule cell migration occurs in the cerebellum, detected in granule cell precursors in the external germinal layer, the molecular layer, the internal granule layer and in Purkinje neurons. Detected in postmitotic neurons in adult cerebellum.

It is found in the membrane. Its subcellular location is the perikaryon. The protein localises to the cytoplasm. The protein resides in the cell cortex. It localises to the early endosome. It is found in the late endosome. Its subcellular location is the cytoplasmic vesicle. The protein localises to the clathrin-coated vesicle. In terms of biological role, mediates recycling of the neuronal cell adhesion molecule ASTN1 to the anterior pole of the cell membrane in migrating neurons. Promotes ASTN1 internalization and intracellular transport of endocytosed ASTN1. Selectively binds inositol-4,5-bisphosphate, inositol-3,4,5-trisphosphate and inositol-1,3,4,5-tetrakisphosphate, suggesting it is recruited to membranes that contain lipids with a phosphoinositide headgroup. In Mus musculus (Mouse), this protein is Astrotactin-2 (Astn2).